The following is a 979-amino-acid chain: Pheromone-regulated membrane protein 10 (979 aa).

Disordered stretches follow at residues 1–279 (MGKS…FFSK), 295–318 (LRNV…EVDG), 337–411 (YSSL…PQRV), 432–451 (FSTA…PLLD), and 491–528 (ATKH…LPKF). Basic and acidic residues predominate over residues 15–26 (GGKDARSPETRS). The segment covering 29-38 (SRSSTDNRSS) has biased composition (low complexity). The span at 54-68 (LDLEEGVDDDADFDW) shows a compositional bias: acidic residues. The segment covering 77–86 (DAQSLDNPFN) has biased composition (polar residues). The segment covering 105–115 (AIERDAVDTIR) has biased composition (basic and acidic residues). Residues 122–135 (EEPDSASDGEDVGM) are compositionally biased toward acidic residues. 2 stretches are compositionally biased toward basic and acidic residues: residues 138–148 (EYQRKRERLVD) and 158–175 (SPRR…HTET). Positions 192-213 (EAGTGTNENGEASSSGMKSSIN) are enriched in polar residues. Residues 253-263 (GAEKGMKSMKD) show a composition bias toward basic and acidic residues. The span at 360-372 (SPSTPSSSPGPES) shows a compositional bias: low complexity. Over residues 379–395 (DDYDFDQVDSDGEDSDL) the composition is skewed to acidic residues. Residues 503–515 (ASGSNSELPSFKN) show a composition bias toward polar residues. Residues 516–528 (TRPKKNKKHLPKF) are compositionally biased toward basic residues. A run of 10 helical transmembrane segments spans residues 658 to 678 (WVCV…AFGG), 680 to 700 (WVNL…QFIV), 710 to 730 (VFEI…GSIG), 734 to 754 (ICFG…YIIL), 773 to 793 (FYAI…AALF), 809 to 829 (PISP…ISLI), 832 to 852 (AHWI…VVTY), 864 to 884 (FTAS…SRVW), 886 to 906 (GLAV…GVAS), and 946 to 966 (ITMI…SLIV).

This sequence belongs to the ThrE exporter (TC 2.A.79) family.

The protein resides in the membrane. The protein is Pheromone-regulated membrane protein 10 of Zygosaccharomyces rouxii (strain ATCC 2623 / CBS 732 / NBRC 1130 / NCYC 568 / NRRL Y-229).